Consider the following 2172-residue polypeptide: Non-reducing polyketide synthase dpfgA (2172 aa).

The segment at 74 to 181 (EWIKCGNSSL…LALCVGALVD (108 aa)) is N-terminal acylcarrier protein transacylase domain (SAT). Positions 389–783 (DDSIAIIGVS…GTNAAMLVCQ (395 aa)) constitute a Ketosynthase family 3 (KS3) domain. Catalysis depends on for beta-ketoacyl synthase activity residues Cys-529, His-665, and His-706. The interval 895 to 1197 (VFAGQTGRQA…SFHSILLQGQ (303 aa)) is malonyl-CoA:ACP transacylase (MAT) domain. The active-site For acyl/malonyl transferase activity is Ser-981. Residues 1270–1403 (PELVSLAGPT…GTINWQGQGC (134 aa)) are N-terminal hotdog fold. Residues 1270–1581 (PELVSLAGPT…LKRIPIRSLQ (312 aa)) enclose the PKS/mFAS DH domain. Residues 1277–1575 (GPTDGETVEF…EIIGASLKRI (299 aa)) are product template (PT) domain. The tract at residues 1428-1581 (SASTVQGLFV…LKRIPIRSLQ (154 aa)) is C-terminal hotdog fold. Disordered stretches follow at residues 1608–1631 (DSDS…HADF) and 1650–1672 (YPMD…VLSD). Residues 1650 to 1668 (YPMDSSSFSSAQPPSSASS) are compositionally biased toward low complexity. The region spanning 1671–1747 (SDHDQESTAL…DLYRMVLNHD (77 aa)) is the Carrier domain. Ser-1707 bears the O-(pantetheine 4'-phosphoryl)serine mark. The disordered stretch occupies residues 1751–1773 (DRGSTVLSDKAPKSKSDSSLHGQ). The methyltransferase (CMeT) domain stretch occupies residues 1975 to 2155 (EFLHRVLSRL…DAGFIHVDWT (181 aa)).

It participates in secondary metabolite biosynthesis; terpenoid biosynthesis. In terms of biological role, non-reducing polyketide synthase; part of the gene cluster that mediates the biosynthesis of diterpenoid pyrones. The first step of the pathway is the synthesis of the alpha-pyrone moiety by the polyketide synthase dpfgA via condensation of one acetyl-CoA starter unit with 3 malonyl-CoA units and 2 methylations. The alpha-pyrone is then combined with geranylgeranyl pyrophosphate (GGPP) formed by the GGPP synthase dpfgD through the action of the prenyltransferase dpfgC to yield a linear alpha-pyrone diterpenoid. Subsequent steps in the diterpenoid pyrone biosynthetic pathway involve the decalin core formation, which is initiated by the epoxidation of the C10-C11 olefin by the FAD-dependent oxidoreductase dpfgE, and is followed by a cyclization cascade catalyzed by the terpene cyclase dpfgB. The short chain dehydrogenase/reductase dpfgG then oxidizes the 8S hydroxy group to a ketone and the short chain dehydrogenase/reductase dpfgH reduces the ketone to the 8R hydroxy group to yield higginsianin B. Higginsianin B is further methylated by the methyltransferase dpfgI to produce the intermediate named FDDP B. The cytochrome P450 monooxygenase dfgpJ then catalyzes a three-step oxidation at C-27 to generate a carboxylic acid as well as C-26 hydroxylation. Finally, methyltransferase dpfgK methylates the carboxylic acid generated by dpfgJ, yielding the final diterpenoid pyrones from the pathway which were named FDDP D and FDDP E. The chain is Non-reducing polyketide synthase dpfgA from Gibberella zeae (strain ATCC MYA-4620 / CBS 123657 / FGSC 9075 / NRRL 31084 / PH-1) (Wheat head blight fungus).